We begin with the raw amino-acid sequence, 397 residues long: Elongation factor Tu (397 aa).

A tr-type G domain is found at 10–206 (KPHCNIGTIG…AVDEYIPQPE (197 aa)). Residues 19–26 (GHIDHGKT) are G1. Position 19–26 (19–26 (GHIDHGKT)) interacts with GTP. Thr-26 contributes to the Mg(2+) binding site. The interval 62 to 66 (GITIS) is G2. The interval 83–86 (DCPG) is G3. GTP-binding positions include 83–87 (DCPGH) and 138–141 (NKCD). The interval 138 to 141 (NKCD) is G4. The segment at 176 to 178 (SAF) is G5.

Belongs to the TRAFAC class translation factor GTPase superfamily. Classic translation factor GTPase family. EF-Tu/EF-1A subfamily. In terms of assembly, monomer.

The protein localises to the cytoplasm. The enzyme catalyses GTP + H2O = GDP + phosphate + H(+). GTP hydrolase that promotes the GTP-dependent binding of aminoacyl-tRNA to the A-site of ribosomes during protein biosynthesis. In Cutibacterium acnes (strain DSM 16379 / KPA171202) (Propionibacterium acnes), this protein is Elongation factor Tu.